The following is a 2850-amino-acid chain: Mucin-6 (2850 aa).

The N-terminal stretch at 1–22 (MLRVRQLLLLLLFRGPLIDAGA) is a signal peptide. The VWFD 1 domain occupies 43–256 (GWCSTWGAGH…KLDDPNEICA (214 aa)). 2 disulfide bridges follow: cysteine 45–cysteine 218 and cysteine 67–cysteine 255. The N-linked (GlcNAc...) asparagine glycan is linked to asparagine 94. The tract at residues 160–183 (HLTEGQGGDEVGTPGTLKQESKGS) is disordered. N-linked (GlcNAc...) asparagine glycosylation occurs at asparagine 310. One can recognise a TIL 1 domain in the interval 344-399 (CPANQVYQECGEVCIKTCSNPQHSCSSPCTFGCFCPHGTLLDDISGNQSCVPVNQC). Residues 437–621 (GHCSLEGGSF…ALEREMDPCS (185 aa)) form the VWFD 2 domain. Intrachain disulfides connect cysteine 439/cysteine 575 and cysteine 461/cysteine 620. Residues asparagine 528 and asparagine 701 are each glycosylated (N-linked (GlcNAc...) asparagine). One can recognise a TIL 2 domain in the interval 806–869 (CPEPKTFQSC…DGQCVPAEEC (64 aa)). Positions 908-1080 (STCVLYGEGH…NSWKESPLCG (173 aa)) constitute a VWFD 3 domain. 4 disulfides stabilise this stretch: cysteine 910/cysteine 1044, cysteine 932/cysteine 1079, cysteine 941/cysteine 1041, and cysteine 959/cysteine 966. N-linked (GlcNAc...) asparagine glycans are attached at residues asparagine 1017 and asparagine 1221. The segment covering 1263 to 1281 (EFHSSTSANTPVAPSYLPG) has biased composition (low complexity). Disordered regions lie at residues 1263 to 1363 (EFHS…TAEL), 1377 to 1400 (GMSTSQEGTPTSKIPVTQTTTHRV), 1466 to 1504 (VSANSIKPTMSSTGTPVVHTTSGTSSSPQTPRTTHPSTT), 1580 to 1600 (TPPVHTTSGTTSSPQTPRTTH), 1626 to 1650 (IASPTPSAPQTSLATHLPFSSTSSV), 1705 to 1813 (TKTS…SLST), 1877 to 1942 (QTKS…RTTH), 1968 to 1992 (IASPTPSAPQTSLATHLPFSSTSSV), 2049 to 2119 (TSFS…PSTT), 2219 to 2254 (QTKSSFSTDRTSTPHLSQSSTVTPTQPTPIPATTNS), 2276 to 2295 (IAHTPHTTHSLPTAASSSTT), 2306 to 2338 (EQSTTTFPTPSAPQTSLVTSLPPFSTSSVSPTD), 2370 to 2473 (TTPP…FRTP), 2511 to 2621 (PTNP…TFVS), 2634 to 2674 (PTIH…KSTT), and 2692 to 2761 (STMG…GTCS). Over residues 1294–1312 (EELTVWTTPKESTVSSGEY) the composition is skewed to polar residues. A compositionally biased stretch (low complexity) spans 1345 to 1363 (TSKPTASSLSSSTKTTAEL). Composition is skewed to polar residues over residues 1378–1399 (MSTSQEGTPTSKIPVTQTTTHR) and 1466–1484 (VSANSIKPTMSSTGTPVVH). 8 consecutive repeat copies span residues 1440–1555 (TQNL…PTTE), 1556–1712 (GLNT…FSTD), 1713–1885 (RTST…FSTD), 1886–2054 (RTSA…FSTD), 2055–2227 (RTST…FSTD), 2228–2396 (RTST…FSTE), 2397–2563 (RTST…FPTT), and 2564–2671 (RTST…FSSK). The tract at residues 1440–2671 (TQNLFSTAPH…VPTFSSFSSK (1232 aa)) is approximate repeats. Over residues 1485-1504 (TTSGTSSSPQTPRTTHPSTT) the composition is skewed to low complexity. Positions 1626 to 1639 (IASPTPSAPQTSLA) are enriched in polar residues. Low complexity predominate over residues 1705–1719 (TKTSFSTDRTSTSTS). Over residues 1720-1757 (APHLSETSAVTAHQSTPTAVSANSIKPTMSSTGTPVVH) the composition is skewed to polar residues. Low complexity predominate over residues 1758-1777 (TTSGTTSSPQTPRTTHPSTT). The span at 1778–1813 (VAVSGTVHTTGLPSGTSVHTTTNFPTHSGPQSSLST) shows a compositional bias: polar residues. Low complexity predominate over residues 1893–1942 (SQPSTVTPTQSTPIPATTNSLMTTGGLTGTPPVHTTSGTTSSPQTPRTTH). Positions 1968 to 1981 (IASPTPSAPQTSLA) are enriched in polar residues. The span at 2049–2061 (TSFSTDRTSTSTS) shows a compositional bias: low complexity. The span at 2062–2099 (APHLSETSAVTAHQSTPTAVSANSIKPTMSSTGTPVVH) shows a compositional bias: polar residues. Over residues 2100-2119 (TTSGTTSSPQTPRTTHPSTT) the composition is skewed to low complexity. Residues 2227–2238 (DRTSTPHLSQSS) show a composition bias toward polar residues. A compositionally biased stretch (low complexity) spans 2282–2295 (TTHSLPTAASSSTT). Low complexity predominate over residues 2370 to 2384 (TTPPNTSTPVTHSTS). Positions 2385 to 2429 (ATTEAQGSFSTERTSTSYLSHPSSTTVHQSTAGPVITSIKSTMGV) are enriched in polar residues. A compositionally biased stretch (low complexity) spans 2436–2456 (HTTSGTTSSPQTPHSTHPIST). The span at 2457-2466 (AAISRTTGIS) shows a compositional bias: polar residues. Over residues 2516-2533 (SVSSASTSRPLSTSLPTT) the composition is skewed to low complexity. The segment covering 2534 to 2560 (IKGTGTPQTPVSDINTTSATTQAHSSF) has biased composition (polar residues). Residues 2561–2584 (PTTRTSTSHLSLPSSMTSTLTPAS) are compositionally biased toward low complexity. Positions 2585 to 2601 (RSASTLQYTPTPSSVSH) are enriched in polar residues. The segment covering 2639–2674 (TPTPSSRPTSSTGLLSTSKTTSHVPTFSSFSSKSTT) has biased composition (low complexity). The segment covering 2692–2725 (STMGMTNLPSSGSPDINHTTRPPGSSPLPTSAFL) has biased composition (polar residues). Positions 2726-2759 (SRSTSPTGSSSPSTPVSSSNPDSSVSSPPSHPGT) are enriched in low complexity. Intrachain disulfides connect cysteine 2760–cysteine 2807, cysteine 2774–cysteine 2821, cysteine 2783–cysteine 2841, and cysteine 2787–cysteine 2843. In terms of domain architecture, CTCK spans 2760 to 2849 (CSLQEEEHQI…SCVCSPLQCK (90 aa)).

Multimer; disulfide-linked. In terms of processing, O-glycosylated. Expressed in stomach, duodenum and small intestine.

It localises to the secreted. May provide a mechanism for modulation of the composition of the protective mucus layer related to acid secretion or the presence of bacteria and noxious agents in the lumen. Plays an important role in the cytoprotection of epithelial surfaces and are used as tumor markers in a variety of cancers. May play a role in epithelial organogenesis. This Mus musculus (Mouse) protein is Mucin-6 (Muc6).